The primary structure comprises 673 residues: Methionine--tRNA ligase (673 aa).

The 'HIGH' region signature appears at 14–24 (YYPSGKLHIGN). Positions 310-314 (KMSKS) match the 'KMSKS' region motif. ATP is bound at residue Lys-313. The 103-residue stretch at 571–673 (VFDKVELKVA…SEAPNGSSIS (103 aa)) folds into the tRNA-binding domain.

Belongs to the class-I aminoacyl-tRNA synthetase family. MetG type 2B subfamily. Homodimer.

Its subcellular location is the cytoplasm. The enzyme catalyses tRNA(Met) + L-methionine + ATP = L-methionyl-tRNA(Met) + AMP + diphosphate. Is required not only for elongation of protein synthesis but also for the initiation of all mRNA translation through initiator tRNA(fMet) aminoacylation. The polypeptide is Methionine--tRNA ligase (metG) (Oceanobacillus iheyensis (strain DSM 14371 / CIP 107618 / JCM 11309 / KCTC 3954 / HTE831)).